Consider the following 348-residue polypeptide: Hereditary hemochromatosis protein homolog (348 aa).

The signal sequence occupies residues 1–22; the sequence is MGPRARPALFFLILLRTVAAQG. The segment at 23-114 is alpha-1; it reads RPPRSHSLRY…IMDNHNHSKE (92 aa). Topologically, residues 23–306 are extracellular; that stretch reads RPPRSHSLRY…WEPSLSNTLV (284 aa). Asn-110, Asn-130, and Asn-234 each carry an N-linked (GlcNAc...) asparagine glycan. Residues 115–205 are alpha-2; that stretch reads SHTLQVILGC…ELGRGVLDQQ (91 aa). Intrachain disulfides connect Cys-124/Cys-187 and Cys-225/Cys-282. Residues 206 to 297 form an alpha-3 region; that stretch reads VPPLVKVTHH…GLDQPLTATW (92 aa). An Ig-like C1-type domain is found at 207–296; that stretch reads PPLVKVTHHV…PGLDQPLTAT (90 aa). Positions 298–306 are connecting peptide; it reads EPSLSNTLV. The helical transmembrane segment at 307–330 threads the bilayer; the sequence is TGVISGIAVCVIIFLIGILFRILR. Residues 331–348 lie on the Cytoplasmic side of the membrane; it reads KRQASRGAMGDYVLAECE.

The protein belongs to the MHC class I family. Binds TFR through the extracellular domain in a pH-dependent manner.

The protein localises to the cell membrane. Binds to transferrin receptor (TFR) and reduces its affinity for iron-loaded transferrin. The chain is Hereditary hemochromatosis protein homolog (HFE) from Dicerorhinus sumatrensis (Sumatran rhinoceros).